A 217-amino-acid chain; its full sequence is Membrane-spanning 4-domains subfamily A member 6C (217 aa).

Residues 1–20 (MIPQVVTNETITTISPNGIN) are compositionally biased toward polar residues. Residues 1–33 (MIPQVVTNETITTISPNGINFPQKDESQPTQQR) form a disordered region. Over 1-46 (MIPQVVTNETITTISPNGINFPQKDESQPTQQRQDSLKKHLKAEIK) the chain is Cytoplasmic. A helical transmembrane segment spans residues 47-67 (VIVAIQIMCAVTVLALGIILA). Over 68-84 (SVPPVPYFNSVFSVLLK) the chain is Extracellular. The chain crosses the membrane as a helical span at residues 85-105 (SGYPFIGALFFIASGILSIIT). Residues 106–121 (ERKSTKPLVDASLTLN) lie on the Cytoplasmic side of the membrane. A helical membrane pass occupies residues 122–142 (ILSVSFAFVGIIIISVSLAGL). Over 143–186 (HPASEQCKQSKELSLIEHDYYQPFYNSDRSECAVTKSILTGALS) the chain is Extracellular. A helical membrane pass occupies residues 187–207 (VMLIISVLELGLALLSAMLWL). Residues 208 to 217 (REGVLTSLRM) lie on the Cytoplasmic side of the membrane.

The protein belongs to the MS4A family. In terms of tissue distribution, expressed only by thymus, spleen, peripheral lymph node and bone marrow.

The protein resides in the membrane. Its function is as follows. May be involved in signal transduction as a component of a multimeric receptor complex. This Mus musculus (Mouse) protein is Membrane-spanning 4-domains subfamily A member 6C (Ms4a6c).